The chain runs to 197 residues: Negative modulator of initiation of replication (197 aa).

It belongs to the SeqA family. As to quaternary structure, homodimer. Polymerizes to form helical filaments.

The protein localises to the cytoplasm. Functionally, negative regulator of replication initiation, which contributes to regulation of DNA replication and ensures that replication initiation occurs exactly once per chromosome per cell cycle. Binds to pairs of hemimethylated GATC sequences in the oriC region, thus preventing assembly of replication proteins and re-initiation at newly replicated origins. Repression is relieved when the region becomes fully methylated. The sequence is that of Negative modulator of initiation of replication from Pseudoalteromonas translucida (strain TAC 125).